Here is a 600-residue protein sequence, read N- to C-terminus: Proline--tRNA ligase (600 aa).

This sequence belongs to the class-II aminoacyl-tRNA synthetase family. ProS type 1 subfamily. As to quaternary structure, homodimer.

It is found in the cytoplasm. It catalyses the reaction tRNA(Pro) + L-proline + ATP = L-prolyl-tRNA(Pro) + AMP + diphosphate. In terms of biological role, catalyzes the attachment of proline to tRNA(Pro) in a two-step reaction: proline is first activated by ATP to form Pro-AMP and then transferred to the acceptor end of tRNA(Pro). As ProRS can inadvertently accommodate and process non-cognate amino acids such as alanine and cysteine, to avoid such errors it has two additional distinct editing activities against alanine. One activity is designated as 'pretransfer' editing and involves the tRNA(Pro)-independent hydrolysis of activated Ala-AMP. The other activity is designated 'posttransfer' editing and involves deacylation of mischarged Ala-tRNA(Pro). The misacylated Cys-tRNA(Pro) is not edited by ProRS. This is Proline--tRNA ligase from Acaryochloris marina (strain MBIC 11017).